Reading from the N-terminus, the 102-residue chain is Putative septation protein SpoVG 2 (102 aa).

This sequence belongs to the SpoVG family.

Its function is as follows. Could be involved in septation. The chain is Putative septation protein SpoVG 2 from Listeria innocua serovar 6a (strain ATCC BAA-680 / CLIP 11262).